The chain runs to 423 residues: GPI mannosyltransferase 2 (423 aa).

9 helical membrane-spanning segments follow: residues 7–27, 102–122, 128–148, 151–171, 191–211, 228–248, 298–318, 333–353, and 400–420; these read LTLIFIAACLSRILHLTILSG, VILGGTIVANVAFVAATLVLY, IFNPTFAFLTSLLYLLPPTAT, APYTEPIYSLLTFSGIYLLSI, TGIFNSITLMCFAVFGDAHIF, FLSAILVVAPFFMFQHYTETV, LAMPILFSSLAGVVKFFSHLV, PPPILFELYSVHVLTMALLLF, and YWIGWTVVWGAVAAVLWAGHY.

It belongs to the PIGV family.

It is found in the endoplasmic reticulum membrane. It functions in the pathway glycolipid biosynthesis; glycosylphosphatidylinositol-anchor biosynthesis. In terms of biological role, mannosyltransferase involved in glycosylphosphatidylinositol-anchor biosynthesis. Transfers the second mannose to the glycosylphosphatidylinositol during GPI precursor assembly. In Cryptococcus neoformans var. neoformans serotype D (strain B-3501A) (Filobasidiella neoformans), this protein is GPI mannosyltransferase 2 (GPI18).